The sequence spans 241 residues: Peroxisomal membrane protein 11C (241 aa).

Residues 1–122 (MALLNRLASA…ADAKVLRVDS (122 aa)) are Cytoplasmic-facing. Residues 123–149 (AWWWTLNTALWTLSLLLGAVKALWTML) traverse the membrane as a helical segment. At 150 to 211 (KLRQKLRSPT…GVLWAGRFPP (62 aa)) the chain is on the lumenal side. Residues 212 to 227 (WLVGLMGTISSILSTC) form a helical membrane-spanning segment. Residues 228–241 (QAVRAGRQAEADSP) are Cytoplasmic-facing.

This sequence belongs to the peroxin-11 family. Homodimer. Heterodimer with either PEX11A or PEX11B. Interacts with FIS1. Expressed in liver and at much lower levels in heart, kidney and testis.

The protein resides in the peroxisome membrane. Its function is as follows. Promotes membrane protrusion and elongation on the peroxisomal surface. This Mus musculus (Mouse) protein is Peroxisomal membrane protein 11C (Pex11g).